The chain runs to 95 residues: NADH-quinone oxidoreductase subunit 11 (95 aa).

Helical transmembrane passes span 1 to 21 (MSYL…VLTR), 25 to 45 (ILVF…LVGF), and 59 to 79 (MVIA…VAIF).

Belongs to the complex I subunit 4L family. NDH-1 is composed of 15 different subunits, Nqo1 to Nqo15. The complex has a L-shaped structure, with the hydrophobic arm (subunits Nqo7, Nqo8 and Nqo10 to Nqo14) embedded in the membrane and the hydrophilic peripheral arm (subunits Nqo1 to Nqo6, Nqo9 and Nqo15) protruding into the bacterial cytoplasm. The hydrophilic domain contains all the redox centers.

The protein resides in the cell inner membrane. It carries out the reaction a quinone + NADH + 5 H(+)(in) = a quinol + NAD(+) + 4 H(+)(out). Functionally, NDH-1 shuttles electrons from NADH, via FMN and iron-sulfur (Fe-S) centers, to quinones in the respiratory chain. The immediate electron acceptor for the enzyme in this species is menaquinone. Couples the redox reaction to proton translocation (for every two electrons transferred, four hydrogen ions are translocated across the cytoplasmic membrane), and thus conserves the redox energy in a proton gradient required for the synthesis of ATP. The sequence is that of NADH-quinone oxidoreductase subunit 11 (nqo11) from Thermus thermophilus (strain ATCC 27634 / DSM 579 / HB8).